Reading from the N-terminus, the 126-residue chain is Large ribosomal subunit protein uL14 (126 aa).

This sequence belongs to the universal ribosomal protein uL14 family. As to quaternary structure, part of the 50S ribosomal subunit. Forms a cluster with proteins L3 and L19. In the 70S ribosome, L14 and L19 interact and together make contacts with the 16S rRNA in bridges B5 and B8.

Its function is as follows. Binds to 23S rRNA. Forms part of two intersubunit bridges in the 70S ribosome. In Persephonella marina (strain DSM 14350 / EX-H1), this protein is Large ribosomal subunit protein uL14.